Here is a 709-residue protein sequence, read N- to C-terminus: PP2C-like domain-containing protein CG9801 (709 aa).

Disordered stretches follow at residues 121-222 (DCYG…NSER), 503-530 (LHPSTPPTRPARQSKAESPPNNAPSRPK), and 678-709 (GGGEEHNNGNENGDGGAISPVLQSKEFKETNF). Polar residues predominate over residues 130-143 (PPVQVATQNSTRLT). The span at 182–196 (ANLAAASAGTDAGKA) shows a compositional bias: low complexity. Polar residues predominate over residues 197-217 (NSDQNNRNVLNAKTEVSTDGD). The PPM-type phosphatase domain occupies 259–503 (SVSLYETNML…KSASAIYARL (245 aa)).

This chain is PP2C-like domain-containing protein CG9801, found in Drosophila melanogaster (Fruit fly).